We begin with the raw amino-acid sequence, 441 residues long: Probable xylan O-acetyltransferase 10 (441 aa).

The Cytoplasmic segment spans residues 1–19 (MMKPQHGGMAGHGGGRTRS). Residues 20-40 (PFLTSYALTLAFITFVSVLYF) form a helical; Signal-anchor for type II membrane protein membrane-spanning segment. Topologically, residues 41 to 441 (KDFSSTLHQP…ELLYSKLFFP (401 aa)) are lumenal. Residues 50–81 (PFLTRPPPHRRQIARPRAPSHHHGGGSSSGGG) form a disordered region. The segment covering 56 to 73 (PPHRRQIARPRAPSHHHG) has biased composition (basic residues). 4 cysteine pairs are disulfide-bonded: cysteine 97–cysteine 148, cysteine 119–cysteine 184, cysteine 128–cysteine 422, and cysteine 341–cysteine 418. Asparagine 154 is a glycosylation site (N-linked (GlcNAc...) asparagine). The short motif at 171 to 173 (GDS) is the GDS motif element. Serine 173 acts as the Nucleophile in catalysis. N-linked (GlcNAc...) asparagine glycans are attached at residues asparagine 212, asparagine 343, and asparagine 381. The active-site Proton donor is aspartate 417. Positions 417 to 420 (DCTH) match the DXXH motif motif. Histidine 420 functions as the Proton acceptor in the catalytic mechanism.

The protein belongs to the PC-esterase family. TBL subfamily. Expressed in roots, leaves and stems.

It localises to the golgi apparatus membrane. Probable xylan acetyltransferase required for 2-O- and 3-O-monoacetylation of xylosyl residues in xylan. Possesses extremely low activity in vitro. This chain is Probable xylan O-acetyltransferase 10, found in Oryza sativa subsp. japonica (Rice).